We begin with the raw amino-acid sequence, 360 residues long: DNA replication and repair protein RecF (360 aa).

Residue 30–37 coordinates ATP; it reads GHNGSGKT.

It belongs to the RecF family.

It localises to the cytoplasm. Functionally, the RecF protein is involved in DNA metabolism; it is required for DNA replication and normal SOS inducibility. RecF binds preferentially to single-stranded, linear DNA. It also seems to bind ATP. The sequence is that of DNA replication and repair protein RecF from Actinobacillus pleuropneumoniae serotype 7 (strain AP76).